The primary structure comprises 2380 residues: DNA polymerase epsilon catalytic subunit A (2380 aa).

Residues 169–196 are compositionally biased toward low complexity; sequence YYNKGNNNNNNHQNYNNNNNQNNNNFNK. 5 disordered regions span residues 169–209, 1178–1210, 1766–1787, 1967–1998, and 2059–2120; these read YYNK…NNSK, FFEK…QQTD, KNTS…NDTT, QQQQ…KNKK, and KIST…TTTS. Residues 1183-1201 are compositionally biased toward acidic residues; that stretch reads EDNDQDNDNDNDNDNDNDN. Over residues 1767–1776 the composition is skewed to low complexity; it reads NTSNNSNTKN. Residues 1777 to 1787 show a composition bias toward polar residues; the sequence is GANQNTTNDTT. Acidic residues predominate over residues 1975-1991; the sequence is NADDDDDDDVSENEEEQ. Low complexity-rich tracts occupy residues 2059–2081 and 2110–2120; these read KIST…TTKD and SSSSSTTTTTS. Positions 2225 and 2228 each coordinate Zn(2+). The segment at 2225 to 2288 adopts a CysA-type zinc-finger fold; sequence CSSCHSCRDI…RVPELSCIQC (64 aa). Residues 2245–2258 are compositionally biased toward low complexity; it reads ISSRLSSQQKSNNN. Residues 2245-2275 form a disordered region; that stretch reads ISSRLSSQQKSNNNDSDDSDDDNEENEGDDD. Positions 2259 to 2275 are enriched in acidic residues; that stretch reads DSDDSDDDNEENEGDDD. Zn(2+)-binding residues include Cys2285 and Cys2288. [4Fe-4S] cluster contacts are provided by Cys2319, Cys2322, Cys2334, and Cys2337. Positions 2319-2337 match the CysB motif motif; it reads CSKCNDVKSDNLGDICPQC.

This sequence belongs to the DNA polymerase type-B family. As to quaternary structure, consists of three subunits: pole, pole2 and pole3. It depends on [4Fe-4S] cluster as a cofactor.

It localises to the nucleus. The enzyme catalyses DNA(n) + a 2'-deoxyribonucleoside 5'-triphosphate = DNA(n+1) + diphosphate. In terms of biological role, DNA polymerase II participates in chromosomal DNA replication. In Dictyostelium discoideum (Social amoeba), this protein is DNA polymerase epsilon catalytic subunit A (pole).